A 621-amino-acid chain; its full sequence is 5-aminolevulinate synthase, mitochondrial (621 aa).

A disordered region spans residues 76 to 95 (DAKGSLAGRPVHHKAATEST). 2 residues coordinate substrate: Arg122 and Ser234. Pyridoxal 5'-phosphate contacts are provided by Ser286, His314, and Thr359. Lys362 is an active-site residue. Lys362 carries the N6-(pyridoxal phosphate)lysine modification. Residues Thr391 and Thr392 each coordinate pyridoxal 5'-phosphate. Thr477 contacts substrate.

It belongs to the class-II pyridoxal-phosphate-dependent aminotransferase family. In terms of assembly, homodimer. Requires pyridoxal 5'-phosphate as cofactor.

It localises to the mitochondrion matrix. It carries out the reaction succinyl-CoA + glycine + H(+) = 5-aminolevulinate + CO2 + CoA. It participates in porphyrin-containing compound metabolism; protoporphyrin-IX biosynthesis; 5-aminolevulinate from glycine: step 1/1. In terms of biological role, catalyzes the synthesis of 5-aminolevulinate (ALA) from succinyl-CoA and glycine, the first and rate-limiting step in heme biosynthesis. This is 5-aminolevulinate synthase, mitochondrial (hem1) from Agaricus bisporus (White button mushroom).